The following is a 393-amino-acid chain: Methylthioribose kinase (393 aa).

Residues asparagine 38, lysine 53, and 107-109 (EDL) contribute to the ATP site. A substrate-binding site is contributed by aspartate 225. Residue 242–244 (DPE) participates in ATP binding. Arginine 332 lines the substrate pocket.

It belongs to the methylthioribose kinase family. In terms of assembly, homodimer.

It carries out the reaction 5-(methylsulfanyl)-D-ribose + ATP = 5-(methylsulfanyl)-alpha-D-ribose 1-phosphate + ADP + H(+). Its pathway is amino-acid biosynthesis; L-methionine biosynthesis via salvage pathway; S-methyl-5-thio-alpha-D-ribose 1-phosphate from S-methyl-5'-thioadenosine (hydrolase route): step 2/2. Catalyzes the phosphorylation of methylthioribose into methylthioribose-1-phosphate. This Bacillus cereus (strain ATCC 10987 / NRS 248) protein is Methylthioribose kinase.